The following is a 227-amino-acid chain: Ribosome-recycling factor, chloroplastic (227 aa).

The transit peptide at 1–34 (WTAAANYVKIKVGTGKFARKTVVLSQKRTGTLKC) directs the protein to the chloroplast. The stretch at 167 to 212 (KVALRNIRRDAIKSYDKLEKEKKLSEDNVKDLSSDLQKVIDEYIKK) forms a coiled coil.

The protein belongs to the RRF family.

It is found in the plastid. The protein localises to the chloroplast. Responsible for the release of ribosomes from messenger RNA at the termination of chloroplastic protein biosynthesis. The polypeptide is Ribosome-recycling factor, chloroplastic (RRF) (Daucus carota (Wild carrot)).